The primary structure comprises 53 residues: Insulin (53 aa).

Positions 1–30 (DVEPLLGFLSPKSGQENEVDDFPYKGQGEL) are cleaved as a propeptide — c peptide. Cysteine 38 and cysteine 43 are disulfide-bonded.

Belongs to the insulin family. Heterodimer of a B chain and an A chain linked by two disulfide bonds.

The protein resides in the secreted. Insulin decreases blood glucose concentration. It increases cell permeability to monosaccharides, amino acids and fatty acids. It accelerates glycolysis, the pentose phosphate cycle, and glycogen synthesis in liver. The protein is Insulin (ins) of Anguilla anguilla (European freshwater eel).